A 736-amino-acid polypeptide reads, in one-letter code: Phosphoribosylformylglycinamidine synthase subunit PurL (736 aa).

H49 is a catalytic residue. ATP contacts are provided by Y52 and K91. Position 93 (E93) interacts with Mg(2+). Residues 94–97 and R116 contribute to the substrate site; that span reads SHNH. The active-site Proton acceptor is the H95. D117 is a Mg(2+) binding site. Q240 is a binding site for substrate. D268 lines the Mg(2+) pocket. 312-314 contributes to the substrate binding site; that stretch reads ESQ. The ATP site is built by D493 and G530. N531 is a Mg(2+) binding site. S533 contacts substrate.

Belongs to the FGAMS family. Monomer. Part of the FGAM synthase complex composed of 1 PurL, 1 PurQ and 2 PurS subunits.

It is found in the cytoplasm. It carries out the reaction N(2)-formyl-N(1)-(5-phospho-beta-D-ribosyl)glycinamide + L-glutamine + ATP + H2O = 2-formamido-N(1)-(5-O-phospho-beta-D-ribosyl)acetamidine + L-glutamate + ADP + phosphate + H(+). The protein operates within purine metabolism; IMP biosynthesis via de novo pathway; 5-amino-1-(5-phospho-D-ribosyl)imidazole from N(2)-formyl-N(1)-(5-phospho-D-ribosyl)glycinamide: step 1/2. In terms of biological role, part of the phosphoribosylformylglycinamidine synthase complex involved in the purines biosynthetic pathway. Catalyzes the ATP-dependent conversion of formylglycinamide ribonucleotide (FGAR) and glutamine to yield formylglycinamidine ribonucleotide (FGAM) and glutamate. The FGAM synthase complex is composed of three subunits. PurQ produces an ammonia molecule by converting glutamine to glutamate. PurL transfers the ammonia molecule to FGAR to form FGAM in an ATP-dependent manner. PurS interacts with PurQ and PurL and is thought to assist in the transfer of the ammonia molecule from PurQ to PurL. In Rhodopseudomonas palustris (strain BisB18), this protein is Phosphoribosylformylglycinamidine synthase subunit PurL.